The chain runs to 324 residues: Beta-ketoacyl-[acyl-carrier-protein] synthase III (324 aa).

Residues Cys116 and His251 contribute to the active site. The segment at 252 to 256 (QANLR) is ACP-binding. Asn281 is an active-site residue.

This sequence belongs to the thiolase-like superfamily. FabH family. As to quaternary structure, homodimer.

The protein resides in the cytoplasm. The enzyme catalyses malonyl-[ACP] + acetyl-CoA + H(+) = 3-oxobutanoyl-[ACP] + CO2 + CoA. The protein operates within lipid metabolism; fatty acid biosynthesis. Catalyzes the condensation reaction of fatty acid synthesis by the addition to an acyl acceptor of two carbons from malonyl-ACP. Catalyzes the first condensation reaction which initiates fatty acid synthesis and may therefore play a role in governing the total rate of fatty acid production. Possesses both acetoacetyl-ACP synthase and acetyl transacylase activities. Its substrate specificity determines the biosynthesis of branched-chain and/or straight-chain of fatty acids. The polypeptide is Beta-ketoacyl-[acyl-carrier-protein] synthase III (Xylella fastidiosa (strain 9a5c)).